The following is a 248-amino-acid chain: Protein FAM133A (248 aa).

Positions 68–80 (NWKKELEKSREKL) are enriched in basic and acidic residues. Positions 68 to 248 (NWKKELEKSR…KKSGSSHKSR (181 aa)) are disordered. Residues 90-102 (KRERKKKRKKKSC) show a composition bias toward basic residues. Low complexity predominate over residues 103–118 (RSSSSSSSSDSSSSSS). The span at 127 to 138 (QGKRRKKKKNRS) shows a compositional bias: basic residues. Composition is skewed to basic and acidic residues over residues 147–156 (HESESESKES), 163–175 (SKDETEKEKDVRS), and 211–220 (RCEEREQAKE). Positions 221–248 (KVKKKKKKQHKKHSKKKKKKSGSSHKSR) are enriched in basic residues.

This sequence belongs to the FAM133 family.

The polypeptide is Protein FAM133A (FAM133A) (Homo sapiens (Human)).